The sequence spans 187 residues: Superoxide dismutase [Cu-Zn] (187 aa).

The first 21 residues, 1 to 21 (MSLLPTGTLILLVLFILVLIT), serve as a signal peptide directing secretion. Residues histidine 76, histidine 78, and histidine 93 each coordinate Cu cation. Residues cysteine 87 and cysteine 176 are joined by a disulfide bond. Zn(2+) contacts are provided by histidine 93, histidine 101, histidine 110, and aspartate 113. A Cu cation-binding site is contributed by histidine 150.

Belongs to the Cu-Zn superoxide dismutase family. Cu cation is required as a cofactor. It depends on Zn(2+) as a cofactor.

It carries out the reaction 2 superoxide + 2 H(+) = H2O2 + O2. In terms of biological role, destroys radicals which are normally produced within the cells and which are toxic to biological systems. In Chlorella (PBCV-1), this protein is Superoxide dismutase [Cu-Zn].